Consider the following 445-residue polypeptide: Zinc finger protein 296 (445 aa).

The span at 1–10 (MSRRKAGRVP) shows a compositional bias: basic residues. Residues 1-20 (MSRRKAGRVPRRVDPDTDTD) form a disordered region. A Glycyl lysine isopeptide (Lys-Gly) (interchain with G-Cter in SUMO2) cross-link involves residue Lys-31. The segment at 62–88 (SRPLGAPSTCAPRMPLSSKSSDRQPWT) is disordered. 3 consecutive C2H2-type zinc fingers follow at residues 138-161 (LSCL…QWDH), 212-234 (PTCD…MRSH), and 240-262 (YSCD…KKTH). The segment at 256-359 (NRHKKTHRQL…TAPRKSHGPG (104 aa)) is disordered. The segment covering 269–278 (SPSTSASSRG) has biased composition (polar residues). Positions 320-332 (PGSGAQGGPGFVG) are enriched in gly residues. The segment covering 338–351 (KVERTDPVKIEKTA) has biased composition (basic and acidic residues). 3 consecutive C2H2-type zinc fingers follow at residues 360 to 382 (GKCE…RRSH), 388 to 410 (YTCD…RRTH), and 418 to 441 (VKCP…RQKH).

Belongs to the krueppel C2H2-type zinc-finger protein family. As to quaternary structure, interacts with KLF4. As to expression, strongly expressed in testis and embryonic stem cells.

Its subcellular location is the nucleus. In terms of biological role, may be a transcriptional corepressor with KLF4. This Mus musculus (Mouse) protein is Zinc finger protein 296.